The following is a 365-amino-acid chain: Chorismate synthase (365 aa).

Arginine 48 provides a ligand contact to NADP(+). Residues 125–127 (RSS), 238–239 (NA), glycine 278, 293–297 (KPTSS), and arginine 319 each bind FMN.

It belongs to the chorismate synthase family. As to quaternary structure, homotetramer. Requires FMNH2 as cofactor.

The enzyme catalyses 5-O-(1-carboxyvinyl)-3-phosphoshikimate = chorismate + phosphate. Its pathway is metabolic intermediate biosynthesis; chorismate biosynthesis; chorismate from D-erythrose 4-phosphate and phosphoenolpyruvate: step 7/7. Catalyzes the anti-1,4-elimination of the C-3 phosphate and the C-6 proR hydrogen from 5-enolpyruvylshikimate-3-phosphate (EPSP) to yield chorismate, which is the branch point compound that serves as the starting substrate for the three terminal pathways of aromatic amino acid biosynthesis. This reaction introduces a second double bond into the aromatic ring system. This is Chorismate synthase from Ruthia magnifica subsp. Calyptogena magnifica.